The primary structure comprises 344 residues: L-rhamnose-proton symporter (344 aa).

A run of 10 helical transmembrane segments spans residues 4–24 (AITM…CFYA), 38–58 (WSVG…ALLL), 68–88 (FSLS…IGNI), 101–121 (MGIG…TPII), 137–157 (TLLG…AGQL), 175–195 (LVLA…MNAA), 214–234 (LPSY…FCFI), 259–279 (VLLS…YAWG), 290–310 (ISWM…GLVL), and 323–343 (VLSL…IGMA).

Belongs to the L-rhamnose transporter (TC 2.A.7.6) family.

The protein resides in the cell inner membrane. The catalysed reaction is L-rhamnopyranose(in) + H(+)(in) = L-rhamnopyranose(out) + H(+)(out). Functionally, uptake of L-rhamnose across the cytoplasmic membrane with the concomitant transport of protons into the cell (symport system). The polypeptide is L-rhamnose-proton symporter (Escherichia coli (strain ATCC 8739 / DSM 1576 / NBRC 3972 / NCIMB 8545 / WDCM 00012 / Crooks)).